Reading from the N-terminus, the 881-residue chain is Armadillo repeat-containing protein 3 (881 aa).

ARM repeat units follow at residues 15 to 54, 57 to 96, 98 to 138, 140 to 179, 181 to 220, 222 to 262, 264 to 304, 306 to 345, 346 to 385, 388 to 427, 429 to 468, and 470 to 509; these read DVFDPITIESKKAATVVLMLKSPEEDILAKACEAIYKFAL, EENKATLLELGAVEPLTKLLTHEDKTVRRNAMMIFGILAS, SDVK…NMSV, YTGKVQIFEHGGLEPLIRLLSSSDPDVKKNSIECIYNLVQ, FQCRTTLQELNAIPPILELLRSEYPIIQLLALKTLGVITC, KEAR…NCLE, MDTM…KAAY, PENRKVFHEQEVEKCLVTLLGSDSDGTKIAASQAISALCE, NLSCKEFFNTQGIPQIVQLLRSDNEEVREAAALALANLTT, PANANAAAEADAIDPLINILSSKRDGAIANAATVLTNMAT, EPLRAIIQNHEIMHALLGPLHSTNTLVQSTAALTVAATAC, and VEARTQLRNCGGLVPLVGLLHSKNDEVRRHASWAVMVCAG. 2 S-palmitoyl cysteine lipidation sites follow: cysteine 507 and cysteine 518. Residues 605–659 are disordered; it reads NNKSDTSPPPSMEDKSSDVGYGRSISSSSSLRRGSKEKANAIFGSPTEEKSEPAS. Residues 622–636 are compositionally biased toward low complexity; it reads DVGYGRSISSSSSLR.

Homodimer. Interacts with PIK3C3, PIK3R4 and BECN1. Interacts (via ARM domains) with ATG14. Post-translationally, palmitoylation is important for its function in autophagy. As to expression, testis-specific.

Its function is as follows. Essential for male fertility and sperm motility. During spermatogenesis, promotes the autophagic degradation of excessive ribosomes, providing energy resources for mitochondria and thus ensuring sperm flagellar motility. This chain is Armadillo repeat-containing protein 3 (Armc3), found in Mus musculus (Mouse).